The sequence spans 46 residues: Large ribosomal subunit protein bL34c (46 aa).

The protein belongs to the bacterial ribosomal protein bL34 family.

The protein resides in the plastid. It localises to the chloroplast. The chain is Large ribosomal subunit protein bL34c (rpl34) from Guillardia theta (Cryptophyte).